A 113-amino-acid chain; its full sequence is U11-theraphotoxin-Hhn1a (113 aa).

Residues 1-21 (MNTVRVTFLLVFVLAVSLGQA) form the signal peptide. Residues 22 to 74 (DKDENRMEMQGKTEQGKSYLDFAENLLLQKLEELEAKLLEEDSEESRNSRQKR) constitute a propeptide that is removed on maturation. Cystine bridges form between C75–C90, C82–C95, and C89–C110.

It belongs to the neurotoxin 14 (magi-1) family. 01 (HNTX-16) subfamily. In terms of tissue distribution, expressed by the venom gland.

The protein localises to the secreted. Its function is as follows. Probable ion channel inhibitor. This chain is U11-theraphotoxin-Hhn1a, found in Cyriopagopus hainanus (Chinese bird spider).